The chain runs to 120 residues: Flagellar protein FliT (120 aa).

The tract at residues 1–50 (MNDFISSLNNWQALYALSNTMLSLANSGQWDELIEQEVKYVTLVEAIARN) is required for homodimerization. Residues 59–97 (FQEKARELLTKVLANEAALKIKLQARMEELRVLIEQNGN) form a fliD binding region.

The protein belongs to the FliT family. In terms of assembly, homodimer. Interacts with FliD and FlhC.

It localises to the cytoplasm. It is found in the cytosol. Its function is as follows. Dual-function protein that regulates the transcription of class 2 flagellar operons and that also acts as an export chaperone for the filament-capping protein FliD. As a transcriptional regulator, acts as an anti-FlhDC factor; it directly binds FlhC, thus inhibiting the binding of the FlhC/FlhD complex to class 2 promoters, resulting in decreased expression of class 2 flagellar operons. As a chaperone, effects FliD transition to the membrane by preventing its premature polymerization, and by directing it to the export apparatus. This chain is Flagellar protein FliT, found in Cronobacter sakazakii (strain ATCC BAA-894) (Enterobacter sakazakii).